The following is a 207-amino-acid chain: Ion-translocating oxidoreductase complex subunit G (207 aa).

Residues 11–31 (GILLGFIALLCTIISAGIFFL) form a helical membrane-spanning segment. Thr175 is modified (FMN phosphoryl threonine).

It belongs to the RnfG family. The complex is composed of six subunits: RnfA, RnfB, RnfC, RnfD, RnfE and RnfG. Requires FMN as cofactor.

The protein resides in the cell inner membrane. In terms of biological role, part of a membrane-bound complex that couples electron transfer with translocation of ions across the membrane. The sequence is that of Ion-translocating oxidoreductase complex subunit G from Haemophilus influenzae (strain ATCC 51907 / DSM 11121 / KW20 / Rd).